Here is a 57-residue protein sequence, read N- to C-terminus: Ribosome modulation factor (57 aa).

Residues 1-28 (MKRQKRDRLERAQSQGYKAGLNGRSHDE) are disordered.

The protein belongs to the ribosome modulation factor family.

The protein resides in the cytoplasm. Its function is as follows. During stationary phase, converts 70S ribosomes to an inactive dimeric form (100S ribosomes). This chain is Ribosome modulation factor, found in Vibrio cholerae serotype O1 (strain MJ-1236).